The sequence spans 202 residues: GTP cyclohydrolase 1 (202 aa).

Zn(2+) is bound by residues Cys90, His93, and Cys163.

The protein belongs to the GTP cyclohydrolase I family. Homomer.

The enzyme catalyses GTP + H2O = 7,8-dihydroneopterin 3'-triphosphate + formate + H(+). It functions in the pathway cofactor biosynthesis; 7,8-dihydroneopterin triphosphate biosynthesis; 7,8-dihydroneopterin triphosphate from GTP: step 1/1. This Mycobacterium marinum (strain ATCC BAA-535 / M) protein is GTP cyclohydrolase 1.